The chain runs to 382 residues: Dual-specificity RNA methyltransferase RlmN (382 aa).

The active-site Proton acceptor is Glu-94. In terms of domain architecture, Radical SAM core spans 100 to 336; the sequence is EANRGTLCVS…NTITRKTRGD (237 aa). Cysteines 107 and 342 form a disulfide. [4Fe-4S] cluster is bound by residues Cys-114, Cys-118, and Cys-121. S-adenosyl-L-methionine is bound by residues 168-169, Ser-200, 222-224, and Asn-299; these read GE and SLH. Residue Cys-342 is the S-methylcysteine intermediate of the active site.

Belongs to the radical SAM superfamily. RlmN family. Requires [4Fe-4S] cluster as cofactor.

The protein localises to the cytoplasm. The catalysed reaction is adenosine(2503) in 23S rRNA + 2 reduced [2Fe-2S]-[ferredoxin] + 2 S-adenosyl-L-methionine = 2-methyladenosine(2503) in 23S rRNA + 5'-deoxyadenosine + L-methionine + 2 oxidized [2Fe-2S]-[ferredoxin] + S-adenosyl-L-homocysteine. The enzyme catalyses adenosine(37) in tRNA + 2 reduced [2Fe-2S]-[ferredoxin] + 2 S-adenosyl-L-methionine = 2-methyladenosine(37) in tRNA + 5'-deoxyadenosine + L-methionine + 2 oxidized [2Fe-2S]-[ferredoxin] + S-adenosyl-L-homocysteine. Functionally, specifically methylates position 2 of adenine 2503 in 23S rRNA and position 2 of adenine 37 in tRNAs. m2A2503 modification seems to play a crucial role in the proofreading step occurring at the peptidyl transferase center and thus would serve to optimize ribosomal fidelity. The chain is Dual-specificity RNA methyltransferase RlmN from Legionella pneumophila subsp. pneumophila (strain Philadelphia 1 / ATCC 33152 / DSM 7513).